The following is a 210-amino-acid chain: Thiamine-phosphate synthase 2 (210 aa).

4-amino-2-methyl-5-(diphosphooxymethyl)pyrimidine-binding positions include 38–42 (QLREK) and Asp70. Residues Asp71 and Glu90 each coordinate Mg(2+). A 4-amino-2-methyl-5-(diphosphooxymethyl)pyrimidine-binding site is contributed by Thr109. Residue 135-137 (TTT) participates in 2-[(2R,5Z)-2-carboxy-4-methylthiazol-5(2H)-ylidene]ethyl phosphate binding. Lys138 contributes to the 4-amino-2-methyl-5-(diphosphooxymethyl)pyrimidine binding site. Gly165 serves as a coordination point for 2-[(2R,5Z)-2-carboxy-4-methylthiazol-5(2H)-ylidene]ethyl phosphate.

It belongs to the thiamine-phosphate synthase family. Mg(2+) is required as a cofactor.

The enzyme catalyses 2-[(2R,5Z)-2-carboxy-4-methylthiazol-5(2H)-ylidene]ethyl phosphate + 4-amino-2-methyl-5-(diphosphooxymethyl)pyrimidine + 2 H(+) = thiamine phosphate + CO2 + diphosphate. It carries out the reaction 2-(2-carboxy-4-methylthiazol-5-yl)ethyl phosphate + 4-amino-2-methyl-5-(diphosphooxymethyl)pyrimidine + 2 H(+) = thiamine phosphate + CO2 + diphosphate. The catalysed reaction is 4-methyl-5-(2-phosphooxyethyl)-thiazole + 4-amino-2-methyl-5-(diphosphooxymethyl)pyrimidine + H(+) = thiamine phosphate + diphosphate. Its pathway is cofactor biosynthesis; thiamine diphosphate biosynthesis; thiamine phosphate from 4-amino-2-methyl-5-diphosphomethylpyrimidine and 4-methyl-5-(2-phosphoethyl)-thiazole: step 1/1. Its function is as follows. Condenses 4-methyl-5-(beta-hydroxyethyl)thiazole monophosphate (THZ-P) and 2-methyl-4-amino-5-hydroxymethyl pyrimidine pyrophosphate (HMP-PP) to form thiamine monophosphate (TMP). This is Thiamine-phosphate synthase 2 from Streptococcus pneumoniae serotype 4 (strain ATCC BAA-334 / TIGR4).